A 758-amino-acid polypeptide reads, in one-letter code: Spastin (758 aa).

Residues 1 to 103 (MVRTKNQSSS…SPRSGHHHSY (103 aa)) are disordered. Topologically, residues 1–121 (MVRTKNQSSS…KQNLYVVSFP (121 aa)) are cytoplasmic. The interval 1–159 (MVRTKNQSSS…VIYRPHRRDC (159 aa)) is interaction with atl. Residues 1–210 (MVRTKNQSSS…RPIQPLEMAA (210 aa)) are required for localization to punctate cytoplasmic foci. Composition is skewed to low complexity over residues 8–28 (SSSSSASSSSTKSPIKSSSGA), 43–58 (RSSSASNVAAVVAGGS), 66–76 (SSNRRSPGSSP), and 85–95 (TDDLTPTTCSP). An intramembrane region (helical) is located at residues 122–142 (IIFLFNVLRSLIYQLFCIFRY). The Cytoplasmic segment spans residues 143-758 (LYGASTKVIY…WSQDYGDITI (616 aa)). 2 stretches are compositionally biased toward polar residues: residues 169 to 180 (SKEQQQSLNHPS) and 189 to 198 (QEQQLSNQPQ). Positions 169–202 (SKEQQQSLNHPSELNREGDGQEQQLSNQPQRFRP) are disordered. The tract at residues 208–758 (MAANRPGGGY…WSQDYGDITI (551 aa)) is sufficient for interaction with microtubules and microtubule severing. In terms of domain architecture, MIT spans 233–308 (HRRAFEYISK…SMARDRLHFL (76 aa)). The disordered stretch occupies residues 353–454 (RVRSSGYGPK…GPSGSGASTP (102 aa)). Composition is skewed to polar residues over residues 390 to 406 (NKSQTLPRNLGSKTSVG) and 425 to 454 (QFSSGRNTPPQRSRTPINNNGPSGSGASTP). Thr-439 bears the Phosphothreonine mark. A required for interaction with microtubules region spans residues 443–455 (NNGPSGSGASTPV). 523 to 530 (GPPGNGKT) contributes to the ATP binding site.

Belongs to the AAA ATPase family. Spastin subfamily. In terms of assembly, homohexamer. The homohexamer is stabilized by ATP-binding. The homohexamer may adopt a ring conformation through which microtubules pass prior to being severed. Interacts with microtubules. Interacts with atl; may be involved in microtubule dynamics.

It is found in the membrane. Its subcellular location is the cytoplasm. The protein localises to the cytoskeleton. The protein resides in the microtubule organizing center. It localises to the centrosome. It is found in the chromosome. Its subcellular location is the lipid droplet. It carries out the reaction n ATP + n H2O + a microtubule = n ADP + n phosphate + (n+1) alpha/beta tubulin heterodimers.. Functionally, ATP-dependent microtubule severing protein. Stimulates microtubule minus-end depolymerization and poleward microtubule flux in the mitotic spindle. Regulates microtubule stability in the neuromuscular junction synapse. Involved in lipid metabolism by regulating the size and distribution of lipid droplets. Involved in axon regeneration by regulating microtubule severing. This is Spastin from Drosophila melanogaster (Fruit fly).